The primary structure comprises 480 residues: MGKTEPEQTGIVTSIRGSVVDMRFDELLPSIYSVVKTGREMEVTVEILMQLDRRHVRGIALTPTEGLCRGMKARNTGSPLKAPVGKGTLSRMFDVFGNAIDRRGPVTNVTWRSVHGAPPQLSRRSTKSEVFETGIKIIDLLVPLERGGKAGLFGGAGVGKTVLLTEMIHNMVSKESGVSIFCGIGERCREGEELYRDMSEAGVLDNMVMVFGQMNEPPGSRFRVGLTALTMAEYFRDDLHQEVLLLIDNIFRFIQAGSEISGMIGQMPSRLGYQPTIGTELSALEERIANTGTGAITSIQAVYVPADDFTDPAAVHTFSHLSASLVLSRKRAGEGFYPAVDPLSSGSKMAGESIVGRRHYDLAREVRRVLAQYAELKDIIAMLGLEQLSAEDRRLVGRARRLERFFTQPFFTTEQFSGLAGKSVPIANTIDGCERILRDEFENYPERALYMIGSIAEAQEKTVIETTMSESVAAKPEGGN.

154–161 is a binding site for ATP; it reads GGAGVGKT.

This sequence belongs to the ATPase alpha/beta chains family. As to quaternary structure, F-type ATPases have 2 components, CF(1) - the catalytic core - and CF(0) - the membrane proton channel. CF(1) has five subunits: alpha(3), beta(3), gamma(1), delta(1), epsilon(1). CF(0) has four main subunits: a(1), b(1), b'(1) and c(9-12).

It localises to the cell inner membrane. It catalyses the reaction ATP + H2O + 4 H(+)(in) = ADP + phosphate + 5 H(+)(out). In terms of biological role, produces ATP from ADP in the presence of a proton gradient across the membrane. The catalytic sites are hosted primarily by the beta subunits. The chain is ATP synthase subunit beta 1 from Chlorobaculum tepidum (strain ATCC 49652 / DSM 12025 / NBRC 103806 / TLS) (Chlorobium tepidum).